We begin with the raw amino-acid sequence, 648 residues long: RalA-binding protein 1 (648 aa).

The disordered stretch occupies residues 1–158 (MTECFLPPSS…KKSKDLTAAD (158 aa)). N-acetylthreonine is present on T2. The segment covering 24–33 (LTRTPSSEEI) has biased composition (polar residues). Phosphoserine is present on residues S29, S30, and S34. The residue at position 44 (T44) is a Phosphothreonine. Residues S48 and S62 each carry the phosphoserine modification. Residues 52-68 (DVLHEPPDTVSDDDKDH) show a composition bias toward basic and acidic residues. 69–74 (GKKKGK) serves as a coordination point for ATP. Basic residues predominate over residues 69–79 (GKKKGKFKKKE). Phosphoserine occurs at positions 92 and 93. Basic residues predominate over residues 102-118 (KVKRSKGIHVFKKPSFS). The tract at residues 102 to 119 (KVKRSKGIHVFKKPSFSK) is nuclear localization signal. Over residues 119-155 (KKKEKDFKIKEKPKEEKHKEEKHKEEKHKEKKSKDLT) the composition is skewed to basic and acidic residues. Residues 154–219 (LTAADVVKQW…PAVFRECVDY (66 aa)) form a mediates association with membranes and could form transmembrane domains region. Residues 192–380 (VPLVDAVERT…VVLKQVTRPL (189 aa)) enclose the Rho-GAP domain. The segment at 403 to 499 (RRQEFLLNCL…LTEQEELLAM (97 aa)) is mediates interaction with RALA and RALB. Position 418–425 (418–425 (GGIKDLSK)) interacts with ATP. A phosphoserine mark is found at S461 and S463. Residues 500–648 (EQFLRRQIAS…PSKDRKETPI (149 aa)) are mediates interaction with REPS1 and REPS2. Disordered regions lie at residues 525–552 (QSRQQHGRSETEEYSSDSESESEDEEEL) and 598–648 (RAKS…ETPI). Residues 536 to 552 (EEYSSDSESESEDEEEL) show a composition bias toward acidic residues. Residues 629–648 (RVAKEQAKASPSKDRKETPI) are compositionally biased toward basic and acidic residues. Position 638 is a phosphoserine (S638).

Interacts with the GTP-bound form of RALA (via effector domain); during mitosis, recruits RALBP1 to the mitochondrion where it promotes DNM1L phosphorylation and mitochondrial fission. Interacts with DNM1L; mediates its mitotic kinase cyclin B-CDK1-mediated phosphorylation during mitosis to promote mitochondrial fission. Interacts with the mitotic kinase cyclin B-CDK1 during mitosis. Interacts with the GTP-bound form of RALB (via effector domain). Interacts with REPS1; the interaction is direct and does not affect RALA-binding nor GTPase activator activity of RALBP1. Interacts with REPS2; the interaction is direct and does not affect RALA-binding nor GTPase activator activity of RALBP1. Interacts with EPN1, NUMB and TFAP2A during interphase and mitosis. Interacts with AP2M1; as part of the AP2 complex. Interacts with CDC42. Interacts with RAC1. Tyrosine-phosphorylated upon stimulation of cells with EGF. In terms of processing, may undergo proteolytic cleavage to give peptides which reassemble to form a transporter complex. Ubiquitous. The highest level of expression was observed in ovaries and skeletal muscle, whereas the lowest was found in spleen, liver and peripheral blood leukocytes.

It is found in the cell membrane. The protein localises to the cytoplasm. The protein resides in the cytosol. It localises to the cytoskeleton. Its subcellular location is the spindle pole. It is found in the nucleus. The protein localises to the mitochondrion. It carries out the reaction an S-substituted glutathione(in) + ATP + H2O = an S-substituted glutathione(out) + ADP + phosphate + H(+). The catalysed reaction is ATP + H2O + xenobioticSide 1 = ADP + phosphate + xenobioticSide 2.. The enzyme catalyses leukotriene C4(in) + ATP + H2O = leukotriene C4(out) + ADP + phosphate + H(+). Its function is as follows. Multifunctional protein that functions as a downstream effector of RALA and RALB. As a GTPase-activating protein/GAP can inactivate CDC42 and RAC1 by stimulating their GTPase activity. As part of the Ral signaling pathway, may also regulate ligand-dependent EGF and insulin receptors-mediated endocytosis. During mitosis, may act as a scaffold protein in the phosphorylation of EPSIN/EPN1 by the mitotic kinase cyclin B-CDK1, preventing endocytosis during that phase of the cell cycle. During mitosis, also controls mitochondrial fission as an effector of RALA. Recruited to mitochondrion by RALA, acts as a scaffold to foster the mitotic kinase cyclin B-CDK1-mediated phosphorylation and activation of DNM1L. Functionally, could also function as a primary ATP-dependent active transporter for glutathione conjugates of electrophiles. May also actively catalyze the efflux of a wide range of substrates including xenobiotics like doxorubicin (DOX) contributing to cell multidrug resistance. The protein is RalA-binding protein 1 of Mus musculus (Mouse).